Here is a 61-residue protein sequence, read N- to C-terminus: MAKKSMIAKAARKPKFKVRAYTRCQICGRPHSVYRDFGICRVCLRKMGNEGLIPGLKKASW.

4 residues coordinate Zn(2+): Cys-24, Cys-27, Cys-40, and Cys-43.

The protein belongs to the universal ribosomal protein uS14 family. Zinc-binding uS14 subfamily. As to quaternary structure, part of the 30S ribosomal subunit. Contacts proteins S3 and S10. Zn(2+) serves as cofactor.

Functionally, binds 16S rRNA, required for the assembly of 30S particles and may also be responsible for determining the conformation of the 16S rRNA at the A site. This Campylobacter jejuni subsp. jejuni serotype O:6 (strain 81116 / NCTC 11828) protein is Small ribosomal subunit protein uS14.